The following is a 343-amino-acid chain: Endoglucanase C (343 aa).

The active-site Proton donor is E140. E280 serves as the catalytic Nucleophile.

This sequence belongs to the glycosyl hydrolase 5 (cellulase A) family.

It carries out the reaction Endohydrolysis of (1-&gt;4)-beta-D-glucosidic linkages in cellulose, lichenin and cereal beta-D-glucans.. It functions in the pathway glycan metabolism; cellulose degradation. This enzyme catalyzes the endohydrolysis of 1,4-beta-glucosidic linkages in cellulose, lichenin and cereal beta-D-glucans. This is Endoglucanase C (celC) from Acetivibrio thermocellus (Hungateiclostridium thermocellum).